The primary structure comprises 138 residues: Basic phospholipase A2 PLA-B' (138 aa).

Positions 1-16 are cleaved as a signal peptide; that stretch reads MRTLWITAVLLVGVEG. 7 disulfide bridges follow: cysteine 42–cysteine 131, cysteine 44–cysteine 60, cysteine 59–cysteine 111, cysteine 65–cysteine 138, cysteine 66–cysteine 104, cysteine 73–cysteine 97, and cysteine 91–cysteine 102. Ca(2+) contacts are provided by tyrosine 43, glycine 45, and glycine 47. Histidine 63 is a catalytic residue. Position 64 (aspartate 64) interacts with Ca(2+). Aspartate 105 is a catalytic residue.

This sequence belongs to the phospholipase A2 family. Group II subfamily. D49 sub-subfamily. Ca(2+) is required as a cofactor. In terms of tissue distribution, expressed by the venom gland.

The protein localises to the secreted. The enzyme catalyses a 1,2-diacyl-sn-glycero-3-phosphocholine + H2O = a 1-acyl-sn-glycero-3-phosphocholine + a fatty acid + H(+). Functionally, PLA2 catalyzes the calcium-dependent hydrolysis of the 2-acyl groups in 3-sn-phosphoglycerides. In Protobothrops flavoviridis (Habu), this protein is Basic phospholipase A2 PLA-B'.